The sequence spans 339 residues: GTP 3',8-cyclase (339 aa).

A Radical SAM core domain is found at 13 to 249; sequence RYGRPLRDLR…GEVAQRHAFA (237 aa). Arg22 contacts GTP. Positions 29 and 33 each coordinate [4Fe-4S] cluster. Tyr35 contacts S-adenosyl-L-methionine. Residue Cys36 participates in [4Fe-4S] cluster binding. Residue Arg75 participates in GTP binding. Residue Gly79 participates in S-adenosyl-L-methionine binding. Position 106 (Thr106) interacts with GTP. Position 130 (Ser130) interacts with S-adenosyl-L-methionine. Position 168 (Lys168) interacts with GTP. Position 202 (Met202) interacts with S-adenosyl-L-methionine. [4Fe-4S] cluster-binding residues include Cys266 and Cys269. 271 to 273 is a GTP binding site; sequence RAR. Cys283 contacts [4Fe-4S] cluster.

It belongs to the radical SAM superfamily. MoaA family. As to quaternary structure, monomer and homodimer. Requires [4Fe-4S] cluster as cofactor.

It catalyses the reaction GTP + AH2 + S-adenosyl-L-methionine = (8S)-3',8-cyclo-7,8-dihydroguanosine 5'-triphosphate + 5'-deoxyadenosine + L-methionine + A + H(+). It functions in the pathway cofactor biosynthesis; molybdopterin biosynthesis. Its function is as follows. Catalyzes the cyclization of GTP to (8S)-3',8-cyclo-7,8-dihydroguanosine 5'-triphosphate. This Xanthomonas campestris pv. campestris (strain 8004) protein is GTP 3',8-cyclase.